Here is a 393-residue protein sequence, read N- to C-terminus: Putative F-box protein At1g55070 (393 aa).

In terms of domain architecture, F-box spans 29–74 (GEYFDRIPADLVIKILSKLSAKSMAKCRCVCKLLSSIIRQPNYNQL).

The polypeptide is Putative F-box protein At1g55070 (Arabidopsis thaliana (Mouse-ear cress)).